Here is a 278-residue protein sequence, read N- to C-terminus: Pantothenate synthetase (278 aa).

30–37 (MGFLHEGH) lines the ATP pocket. His37 functions as the Proton donor in the catalytic mechanism. A (R)-pantoate-binding site is contributed by Gln61. A beta-alanine-binding site is contributed by Gln61. Residue 147–150 (GQKD) participates in ATP binding. Residue Gln153 participates in (R)-pantoate binding. ATP-binding positions include Val176 and 184–187 (LSSR).

It belongs to the pantothenate synthetase family. Homodimer.

It localises to the cytoplasm. The catalysed reaction is (R)-pantoate + beta-alanine + ATP = (R)-pantothenate + AMP + diphosphate + H(+). The protein operates within cofactor biosynthesis; (R)-pantothenate biosynthesis; (R)-pantothenate from (R)-pantoate and beta-alanine: step 1/1. Its function is as follows. Catalyzes the condensation of pantoate with beta-alanine in an ATP-dependent reaction via a pantoyl-adenylate intermediate. The protein is Pantothenate synthetase of Thermosipho africanus (strain TCF52B).